Reading from the N-terminus, the 219-residue chain is Small ribosomal subunit protein uS3 (219 aa).

Residues 38 to 106 form the KH type-2 domain; that stretch reads IREYINVRLK…RVHINILEVK (69 aa).

Belongs to the universal ribosomal protein uS3 family. As to quaternary structure, part of the 30S ribosomal subunit. Forms a tight complex with proteins S10 and S14.

In terms of biological role, binds the lower part of the 30S subunit head. Binds mRNA in the 70S ribosome, positioning it for translation. This chain is Small ribosomal subunit protein uS3, found in Bacillus thuringiensis (strain Al Hakam).